We begin with the raw amino-acid sequence, 201 residues long: uncharacterized protein (201 aa).

Residues 11–31 (IWKSLYLLIIVGMLYIGYILI) traverse the membrane as a helical segment.

It is found in the membrane. This is an uncharacterized protein from Rickettsia prowazekii (strain Madrid E).